Consider the following 805-residue polypeptide: Mediator of RNA polymerase II transcription subunit 25 (805 aa).

2 disordered regions span residues 308–332 and 647–691; these read NQMP…PQNT and QQPQ…NPQL. A compositionally biased stretch (low complexity) spans 647–678; the sequence is QQPQQAASQAPPQATQTTVQAPGQPQNPQPGA. The LXXLL motif signature appears at 691–695; that stretch reads LRNLL.

It belongs to the Mediator complex subunit 25 family. In terms of assembly, component of the Mediator complex.

The protein localises to the nucleus. Component of the Mediator complex, a coactivator involved in the regulated transcription of nearly all RNA polymerase II-dependent genes. Mediator functions as a bridge to convey information from gene-specific regulatory proteins to the basal RNA polymerase II transcription machinery. Mediator is recruited to promoters by direct interactions with regulatory proteins and serves as a scaffold for the assembly of a functional preinitiation complex with RNA polymerase II and the general transcription factors. The chain is Mediator of RNA polymerase II transcription subunit 25 (med25) from Xenopus tropicalis (Western clawed frog).